The chain runs to 143 residues: Transcriptional regulator MraZ (143 aa).

2 SpoVT-AbrB domains span residues 5-47 and 76-119; these read TYAP…SQRE and ASAE…DAEA.

It belongs to the MraZ family. As to quaternary structure, forms oligomers.

The protein localises to the cytoplasm. It localises to the nucleoid. The sequence is that of Transcriptional regulator MraZ from Leifsonia xyli subsp. xyli (strain CTCB07).